The sequence spans 346 residues: Phospholipase A1 (346 aa).

The signal sequence occupies residues 1-26 (MRKFAAIFVVFFVQCTHLYSLAQARA). Positions 27–37 (EPDPGVVEYLK) are excised as a propeptide. Residues Asn44 and Asn72 are each glycosylated (N-linked (GlcNAc...) asparagine). Residue Ser167 is the Nucleophile of the active site. Residue Asn185 is glycosylated (N-linked (GlcNAc...) asparagine). Residues Asp195 and His258 each act as charge relay system in the active site.

Belongs to the AB hydrolase superfamily. Lipase family. Contains six disulfide bonds. In terms of processing, N-glycosylated; contains mannose. In terms of tissue distribution, expressed by the venom gland.

The protein resides in the secreted. It carries out the reaction a 1,2-diacyl-sn-glycero-3-phosphocholine + H2O = a 2-acyl-sn-glycero-3-phosphocholine + a fatty acid + H(+). Catalyzes the hydrolysis of phosphatidylcholine with phospholipase A1 activity. Induces hemolytic activity. Acts as an allergen. This is Phospholipase A1 from Solenopsis invicta (Red imported fire ant).